Reading from the N-terminus, the 320-residue chain is Histidine decarboxylase proenzyme (320 aa).

Residues 2–11 (NKNLEANRNR) constitute a propeptide that is removed on maturation. Residue S98 is modified to Pyruvic acid (Ser). Residue E215 is the Proton donor of the active site.

In terms of assembly, the proenzyme is a hexamer of identical pi chains; each pi chain monomer is cleaved to form a small (or beta) chain and a large (or alpha) chain by non-hydrolytic self-catalysis. Pyruvate is required as a cofactor.

The catalysed reaction is L-histidine + H(+) = histamine + CO2. This is Histidine decarboxylase proenzyme (hdc) from Clostridium perfringens (strain ATCC 13124 / DSM 756 / JCM 1290 / NCIMB 6125 / NCTC 8237 / Type A).